Consider the following 579-residue polypeptide: YTH domain-containing family protein 2 (579 aa).

The segment at 1 to 45 (MSASSLLEQRPKGQGNKVQNGSVHQKDGLNDDDFEPYLSPQARPN) is disordered. N-acetylserine is present on Ser-2. Residues Ser-2, Ser-4, Ser-5, Ser-22, Ser-39, and Ser-196 each carry the phosphoserine modification. Positions 2–384 (SASSLLEQRP…QAGSGSTPSE (383 aa)) are localization to mRNA processing bodies (P-bodies). The disordered stretch occupies residues 247-387 (AKQQPKLKTK…SGSTPSEPHP (141 aa)). Over residues 291–316 (ALVQNIGQPTQGSPQHVGQQANNSPP) the composition is skewed to polar residues. Residues 337–349 (AQLSVQQQAAQPT) show a composition bias toward low complexity. A Phosphoserine modification is found at Ser-359. Residues 359–371 (SGFGHNGVDGNGV) are compositionally biased toward gly residues. The segment covering 372–383 (GQSQAGSGSTPS) has biased composition (polar residues). The tract at residues 385–579 (PHPVLEKLRS…VKKERQGRGK (195 aa)) is interaction with m6A-containing mRNAs. Phosphoserine is present on Ser-394. The YTH domain maps to 410-544 (GRVFIIKSYS…EKAKQVLKII (135 aa)). RNA-binding positions include 416–418 (KSY), Asp-422, 432–433 (WC), Asn-462, Trp-486, and Trp-491.

It belongs to the YTHDF family. YTHDF2 subfamily. As to quaternary structure, interacts with CNOT1; interaction is direct and promotes recruitment of the CCR4-NOT complex. Interacts with YTHDF3. Interacts with RIDA/HRSP12; interaction leads to recruitment of the ribonuclease P/MRP complex. In terms of processing, ubiquitinated by the SCF(SKP2) complex, leading to its degradation.

It is found in the cytoplasm. The protein resides in the cytosol. Its subcellular location is the P-body. The protein localises to the stress granule. It localises to the nucleus. Its function is as follows. Specifically recognizes and binds N6-methyladenosine (m6A)-containing RNAs, and regulates their stability. M6A is a modification present at internal sites of mRNAs and some non-coding RNAs and plays a role in mRNA stability and processing. Acts as a regulator of mRNA stability by promoting degradation of m6A-containing mRNAs via interaction with the CCR4-NOT and ribonuclease P/MRP complexes, depending on the context. The YTHDF paralogs (YTHDF1, YTHDF2 and YTHDF3) share m6A-containing mRNAs targets and act redundantly to mediate mRNA degradation and cellular differentiation. M6A-containing mRNAs containing a binding site for RIDA/HRSP12 (5'-GGUUC-3') are preferentially degraded by endoribonucleolytic cleavage: cooperative binding of RIDA/HRSP12 and YTHDF2 to transcripts leads to recruitment of the ribonuclease P/MRP complex. Other m6A-containing mRNAs undergo deadenylation via direct interaction between YTHDF2 and CNOT1, leading to recruitment of the CCR4-NOT and subsequent deadenylation of m6A-containing mRNAs. Required maternally to regulate oocyte maturation: probably acts by binding to m6A-containing mRNAs, thereby regulating maternal transcript dosage during oocyte maturation, which is essential for the competence of oocytes to sustain early zygotic development. Also required during spermatogenesis: regulates spermagonial adhesion by promoting degradation of m6A-containing transcripts coding for matrix metallopeptidases. Also involved in hematopoietic stem cells specification by binding to m6A-containing mRNAs, leading to promote their degradation. Also acts as a regulator of neural development by promoting m6A-dependent degradation of neural development-related mRNA targets. Inhibits neural specification of induced pluripotent stem cells by binding to methylated neural-specific mRNAs and promoting their degradation, thereby restraining neural differentiation. Regulates circadian regulation of hepatic lipid metabolism: acts by promoting m6A-dependent degradation of PPARA transcripts. Regulates the innate immune response to infection by inhibiting the type I interferon response: acts by binding to m6A-containing IFNB transcripts and promoting their degradation. May also act as a promoter of cap-independent mRNA translation following heat shock stress: upon stress, relocalizes to the nucleus and specifically binds mRNAs with some m6A methylation mark at their 5'-UTR, protecting demethylation of mRNAs by FTO, thereby promoting cap-independent mRNA translation. Regulates mitotic entry by promoting the phase-specific m6A-dependent degradation of WEE1 transcripts. Promotes formation of phase-separated membraneless compartments, such as P-bodies or stress granules, by undergoing liquid-liquid phase separation upon binding to mRNAs containing multiple m6A-modified residues: polymethylated mRNAs act as a multivalent scaffold for the binding of YTHDF proteins, juxtaposing their disordered regions and thereby leading to phase separation. The resulting mRNA-YTHDF complexes then partition into different endogenous phase-separated membraneless compartments, such as P-bodies, stress granules or neuronal RNA granules. May also recognize and bind RNAs modified by C5-methylcytosine (m5C) and act as a regulator of rRNA processing. The chain is YTH domain-containing family protein 2 from Macaca fascicularis (Crab-eating macaque).